We begin with the raw amino-acid sequence, 119 residues long: Basic phospholipase A2 DE-1 (119 aa).

Cystine bridges form between C11/C71, C26/C118, C28/C44, C43/C99, C50/C92, C60/C85, and C78/C90. Residues Y27, G29, G31, and D48 each coordinate Ca(2+). D93 is a catalytic residue.

It belongs to the phospholipase A2 family. Group I subfamily. D49 sub-subfamily. Requires Ca(2+) as cofactor. Expressed by the venom gland.

The protein localises to the secreted. It catalyses the reaction a 1,2-diacyl-sn-glycero-3-phosphocholine + H2O = a 1-acyl-sn-glycero-3-phosphocholine + a fatty acid + H(+). In terms of biological role, PLA2 catalyzes the calcium-dependent hydrolysis of the 2-acyl groups in 3-sn-phosphoglycerides. In Hemachatus haemachatus (Rinkhals), this protein is Basic phospholipase A2 DE-1.